Here is a 98-residue protein sequence, read N- to C-terminus: uncharacterized protein (98 aa).

Positions arginine 19 to lysine 31 are enriched in basic residues. A disordered region spans residues arginine 19–serine 47.

The protein belongs to the lymphocryptovirus BNLF2b family.

This is an uncharacterized protein from Homo sapiens (Human).